Here is a 568-residue protein sequence, read N- to C-terminus: Probable WRKY transcription factor 34 (568 aa).

Positions 172 to 236 form a DNA-binding region, WRKY 1; that stretch reads ACCAPADDGY…YTGDHIHSKP (65 aa). 4 residues coordinate Zn(2+): Cys203, Cys208, His231, and His233. Disordered regions lie at residues 230-252 and 337-360; these read DHIH…TGQD and KRRK…EPRV. Positions 366 to 431 form a DNA-binding region, WRKY 2; that stretch reads SDIDILDDGY…YIGKHTHVVP (66 aa). Positions 397, 402, 426, and 428 each coordinate Zn(2+).

This sequence belongs to the WRKY group I family.

The protein resides in the nucleus. In terms of biological role, transcription factor. Interacts specifically with the W box (5'-(T)TGAC[CT]-3'), a frequently occurring elicitor-responsive cis-acting element. This chain is Probable WRKY transcription factor 34 (WRKY34), found in Arabidopsis thaliana (Mouse-ear cress).